A 922-amino-acid chain; its full sequence is Isoleucine--tRNA ligase (922 aa).

The 'HIGH' region signature appears at proline 57 to histidine 67. Glutamate 553 lines the L-isoleucyl-5'-AMP pocket. The 'KMSKS' region motif lies at lysine 594–serine 598. Lysine 597 contacts ATP. Positions 892, 895, 912, and 915 each coordinate Zn(2+).

The protein belongs to the class-I aminoacyl-tRNA synthetase family. IleS type 1 subfamily. Monomer. Requires Zn(2+) as cofactor.

The protein localises to the cytoplasm. The catalysed reaction is tRNA(Ile) + L-isoleucine + ATP = L-isoleucyl-tRNA(Ile) + AMP + diphosphate. Functionally, catalyzes the attachment of isoleucine to tRNA(Ile). As IleRS can inadvertently accommodate and process structurally similar amino acids such as valine, to avoid such errors it has two additional distinct tRNA(Ile)-dependent editing activities. One activity is designated as 'pretransfer' editing and involves the hydrolysis of activated Val-AMP. The other activity is designated 'posttransfer' editing and involves deacylation of mischarged Val-tRNA(Ile). This is Isoleucine--tRNA ligase from Desulfitobacterium hafniense (strain DSM 10664 / DCB-2).